A 283-amino-acid polypeptide reads, in one-letter code: Probable endonuclease 4 (283 aa).

9 residues coordinate Zn(2+): His-69, His-109, Glu-144, Asp-178, His-181, His-215, Asp-228, His-230, and Glu-260.

The protein belongs to the AP endonuclease 2 family. Zn(2+) serves as cofactor.

It catalyses the reaction Endonucleolytic cleavage to 5'-phosphooligonucleotide end-products.. Its function is as follows. Endonuclease IV plays a role in DNA repair. It cleaves phosphodiester bonds at apurinic or apyrimidinic (AP) sites, generating a 3'-hydroxyl group and a 5'-terminal sugar phosphate. This chain is Probable endonuclease 4, found in Thermosipho melanesiensis (strain DSM 12029 / CIP 104789 / BI429).